Consider the following 217-residue polypeptide: Orotidine 5'-phosphate decarboxylase (217 aa).

Residues aspartate 14, lysine 36, 64–73 (DFKVADIPST), serine 120, 172–182 (PGVGAQGGNLS), glycine 197, and arginine 198 each bind substrate. The Proton donor role is filled by lysine 66.

It belongs to the OMP decarboxylase family. Type 1 subfamily. In terms of assembly, homodimer.

The catalysed reaction is orotidine 5'-phosphate + H(+) = UMP + CO2. It functions in the pathway pyrimidine metabolism; UMP biosynthesis via de novo pathway; UMP from orotate: step 2/2. In terms of biological role, catalyzes the decarboxylation of orotidine 5'-monophosphate (OMP) to uridine 5'-monophosphate (UMP). This is Orotidine 5'-phosphate decarboxylase from Methanococcus maripaludis (strain C6 / ATCC BAA-1332).